We begin with the raw amino-acid sequence, 464 residues long: UDP-N-acetylmuramate--L-alanine ligase (464 aa).

123–129 serves as a coordination point for ATP; sequence GTHGKTT.

Belongs to the MurCDEF family.

Its subcellular location is the cytoplasm. The catalysed reaction is UDP-N-acetyl-alpha-D-muramate + L-alanine + ATP = UDP-N-acetyl-alpha-D-muramoyl-L-alanine + ADP + phosphate + H(+). It participates in cell wall biogenesis; peptidoglycan biosynthesis. Its function is as follows. Cell wall formation. The sequence is that of UDP-N-acetylmuramate--L-alanine ligase from Carboxydothermus hydrogenoformans (strain ATCC BAA-161 / DSM 6008 / Z-2901).